We begin with the raw amino-acid sequence, 184 residues long: Bifunctional protein PyrR (184 aa).

The PRPP-binding motif lies at 105–117; that stretch reads VVMVDDVLFTGRT.

It belongs to the purine/pyrimidine phosphoribosyltransferase family. PyrR subfamily.

It catalyses the reaction UMP + diphosphate = 5-phospho-alpha-D-ribose 1-diphosphate + uracil. Its function is as follows. Regulates the transcription of the pyrimidine nucleotide (pyr) operon in response to exogenous pyrimidines. In terms of biological role, also displays a weak uracil phosphoribosyltransferase activity which is not physiologically significant. The protein is Bifunctional protein PyrR of Rubrobacter xylanophilus (strain DSM 9941 / JCM 11954 / NBRC 16129 / PRD-1).